The chain runs to 240 residues: NADH-quinone oxidoreductase subunit I 2 (240 aa).

4Fe-4S ferredoxin-type domains follow at residues 57 to 86 and 97 to 126; these read TDLRTGEYKCTSCMQCAQACPVNVITIEWH and DRFAIDMSRCMLCNFCVEACPFDSLVMGYD. [4Fe-4S] cluster is bound by residues C66, C69, C72, C76, C106, C109, C112, and C116. Residues 185-240 are disordered; the sequence is IHGYLGRPPLPKGYEPELKPQFRKPAEEAAEAQQAEAAGQPAAEPGKTNGEEAGQP. Residues 198-211 are compositionally biased toward basic and acidic residues; sequence YEPELKPQFRKPAE. Low complexity predominate over residues 215–230; sequence EAQQAEAAGQPAAEPG.

The protein belongs to the complex I 23 kDa subunit family. In terms of assembly, NDH-1 is composed of 14 different subunits. Subunits NuoA, H, J, K, L, M, N constitute the membrane sector of the complex. Requires [4Fe-4S] cluster as cofactor.

The protein localises to the cell membrane. The catalysed reaction is a quinone + NADH + 5 H(+)(in) = a quinol + NAD(+) + 4 H(+)(out). Functionally, NDH-1 shuttles electrons from NADH, via FMN and iron-sulfur (Fe-S) centers, to quinones in the respiratory chain. The immediate electron acceptor for the enzyme in this species is believed to be ubiquinone. Couples the redox reaction to proton translocation (for every two electrons transferred, four hydrogen ions are translocated across the cytoplasmic membrane), and thus conserves the redox energy in a proton gradient. This chain is NADH-quinone oxidoreductase subunit I 2, found in Symbiobacterium thermophilum (strain DSM 24528 / JCM 14929 / IAM 14863 / T).